Reading from the N-terminus, the 242-residue chain is Adenylate kinase 1 (242 aa).

Residues 38 to 43 and glycine 42 each bind ATP; that span reads GSGKGT. The tract at residues 58 to 87 is NMP; it reads STGDLLREAAEKKTELGLKIKNIINEGKLV. AMP contacts are provided by residues threonine 59, arginine 64, 85 to 87, glycine 113, 113 to 116, and glutamine 120; these read KLV and GYPR. The LID stretch occupies residues 154–191; the sequence is GRLIHKPSGRIYHKIFNPPKVPFRDDVTNEPLIQREDD. ATP-binding residues include arginine 155 and tyrosine 165. Arginine 199 serves as a coordination point for AMP. Residue alanine 229 participates in ATP binding.

The protein belongs to the adenylate kinase family.

The protein resides in the cytoplasm. The catalysed reaction is AMP + ATP = 2 ADP. Its activity is regulated as follows. Inhibited by the dinucleoside pentaphosphate compound P1,P5-di(adenosine-5') pentaphosphate (AP5A). In terms of biological role, catalyzes the reversible transfer of the terminal phosphate group between ATP and AMP. Has very low activity with CTP, GTP, ITP and UTP and no activity with GMP, CMP, UMP or IMP in vitro. The polypeptide is Adenylate kinase 1 (Plasmodium falciparum (isolate 3D7)).